The primary structure comprises 186 residues: Mediator of RNA polymerase II transcription subunit 10a (186 aa).

It belongs to the Mediator complex subunit 10 family. In terms of assembly, mono-, di- and oligomers. Component of the Mediator complex. Interacts with GEBPL.

The protein localises to the nucleus. In terms of biological role, component of the Mediator complex, a coactivator involved in the regulated transcription of nearly all RNA polymerase II-dependent genes. Mediator functions as a bridge to convey information from gene-specific regulatory proteins to the basal RNA polymerase II transcription machinery. The Mediator complex, having a compact conformation in its free form, is recruited to promoters by direct interactions with regulatory proteins and serves for the assembly of a functional pre-initiation complex with RNA polymerase II and the general transcription factors. The protein is Mediator of RNA polymerase II transcription subunit 10a of Arabidopsis thaliana (Mouse-ear cress).